We begin with the raw amino-acid sequence, 621 residues long: Protein CASP (621 aa).

The Cytoplasmic portion of the chain corresponds to 1–574 (MEIVSRAWES…ILATPKSRTV (574 aa)). 2 coiled-coil regions span residues 101–445 (LLKG…VQDI) and 473–525 (ILTS…FLQS). A helical; Anchor for type IV membrane protein transmembrane segment spans residues 575–595 (FFSYLLILHALIMLVLYKFAF). The Lumenal portion of the chain corresponds to 596-621 (DQSVVRDAETECEYKFHQHMLDNHKQ).

This sequence belongs to the CASP family.

The protein resides in the golgi apparatus membrane. Its function is as follows. May be involved in intra-Golgi retrograde transport. The sequence is that of Protein CASP (ceh-44) from Caenorhabditis elegans.